A 408-amino-acid chain; its full sequence is UDP-N-acetylglucosamine--dolichyl-phosphate N-acetylglucosaminephosphotransferase (408 aa).

The Lumenal portion of the chain corresponds to 1–10 (MWAFPELPLP). The helical transmembrane segment at 11–38 (LLVNLFGSLLGFVATVTLIPAFRSHFIA) threads the bilayer. Topologically, residues 39–58 (ARLCGQDLNKLSRQQIPESQ) are cytoplasmic. UDP-N-acetyl-alpha-D-glucosamine contacts are provided by residues 44–46 (QDL) and E56. The chain crosses the membrane as a helical span at residues 59–78 (GVICGAVFLIILFCFIPFPF). Over 79-91 (LNCFVEEQCKAFP) the chain is Lumenal. Residues 92-118 (HHEFVALIGALLAICCMIFLGFADDVL) traverse the membrane as a helical segment. At 119 to 121 (NLR) the chain is on the cytoplasmic side. A helical membrane pass occupies residues 122–143 (WRHKLLLPTAASLPLLMVYFTN). K125 serves as a coordination point for dolichyl phosphate. At 144–166 (FGNTTIVVPKPFRWILGLHLDLG) the chain is on the lumenal side. N-linked (GlcNAc...) asparagine glycosylation occurs at N146. Residues 167–186 (ILYYVYMGLLAVFCTNAINI) form a helical membrane-spanning segment. 178-186 (VFCTNAINI) serves as a coordination point for dolichyl phosphate. A Mg(2+)-binding site is contributed by N185. At 187–192 (LAGING) the chain is on the cytoplasmic side. N191 provides a ligand contact to UDP-N-acetyl-alpha-D-glucosamine. The chain crosses the membrane as a helical span at residues 193–213 (LEAGQSLVISASIIVFNLVEL). The Lumenal portion of the chain corresponds to 214–218 (EGDYR). The chain crosses the membrane as a helical span at residues 219–242 (DDHVFSLYFMIPFFFTTLGLLYHN). At 243-250 (WYPSQVFV) the chain is on the cytoplasmic side. A helical membrane pass occupies residues 251-269 (GDTFCYFAGMTFAVVGILG). D252 lines the Mg(2+) pocket. Residues 270–271 (HF) are Lumenal-facing. The helical transmembrane segment at 272–293 (SKTMLLFFIPQVFNFLYSLPQL) threads the bilayer. Residues 294–375 (LHAIPCPRHR…LLLKIFGPIH (82 aa)) are Cytoplasmic-facing. A UDP-N-acetyl-alpha-D-glucosamine-binding site is contributed by 301–303 (RHR). A helical membrane pass occupies residues 376 to 400 (ERNLTLLLLLLQILSSAVTFSIRYQ). The Lumenal portion of the chain corresponds to 401 to 408 (LVRLFYDV).

Belongs to the glycosyltransferase 4 family. As to quaternary structure, homodimer. Mg(2+) serves as cofactor.

Its subcellular location is the endoplasmic reticulum membrane. The enzyme catalyses a di-trans,poly-cis-dolichyl phosphate + UDP-N-acetyl-alpha-D-glucosamine = an N-acetyl-alpha-D-glucosaminyl-diphospho-di-trans,poly-cis-dolichol + UMP. Its pathway is protein modification; protein glycosylation. With respect to regulation, inhibited by natural nucleoside antibiotic tunicamycin, which acts as a structural analog and competitor of UDP-GlcNAc. Its function is as follows. UDP-N-acetylglucosamine--dolichyl-phosphate N-acetylglucosaminephosphotransferase that operates in the biosynthetic pathway of dolichol-linked oligosaccharides, the glycan precursors employed in protein asparagine (N)-glycosylation. The assembly of dolichol-linked oligosaccharides begins on the cytosolic side of the endoplasmic reticulum membrane and finishes in its lumen. The sequential addition of sugars to dolichol pyrophosphate produces dolichol-linked oligosaccharides containing fourteen sugars, including two GlcNAcs, nine mannoses and three glucoses. Once assembled, the oligosaccharide is transferred from the lipid to nascent proteins by oligosaccharyltransferases. Catalyzes the initial step of dolichol-linked oligosaccharide biosynthesis, transfering GlcNAc-1-P from cytosolic UDP-GlcNAc onto the carrier lipid dolichyl phosphate (P-dolichol), yielding GlcNAc-P-P-dolichol embedded in the cytoplasmic leaflet of the endoplasmic reticulum membrane. The polypeptide is UDP-N-acetylglucosamine--dolichyl-phosphate N-acetylglucosaminephosphotransferase (DPAGT1) (Cricetulus griseus (Chinese hamster)).